The primary structure comprises 121 residues: Large ribosomal subunit protein bL21 (121 aa).

It belongs to the bacterial ribosomal protein bL21 family. As to quaternary structure, part of the 50S ribosomal subunit. Contacts protein L20.

In terms of biological role, this protein binds to 23S rRNA in the presence of protein L20. This chain is Large ribosomal subunit protein bL21, found in Gloeobacter violaceus (strain ATCC 29082 / PCC 7421).